Reading from the N-terminus, the 142-residue chain is uncharacterized protein (142 aa).

The tract at residues Ile19–Ser54 is disordered. The segment covering His26 to His35 has biased composition (basic residues).

This is an uncharacterized protein from Saccharomyces cerevisiae (strain ATCC 204508 / S288c) (Baker's yeast).